A 63-amino-acid polypeptide reads, in one-letter code: Large ribosomal subunit protein uL29 (63 aa).

It belongs to the universal ribosomal protein uL29 family.

The chain is Large ribosomal subunit protein uL29 from Bdellovibrio bacteriovorus (strain ATCC 15356 / DSM 50701 / NCIMB 9529 / HD100).